A 379-amino-acid chain; its full sequence is Alternative oxidase 1, mitochondrial (379 aa).

The span at 33 to 50 (TTTTSTKSRSSTSTAATT) shows a compositional bias: low complexity. The disordered stretch occupies residues 33–76 (TTTTSTKSRSSTSTAATTVGNSNPKSPIDEDNLEKPGTIPTKHK). The Fe cation site is built by E180, E219, and H222. Residues 234-256 (WFTRSIIYIGQGVFTNIFFLVYL) traverse the membrane as a helical segment. The Fe cation site is built by E270, E271, E326, and H329.

This sequence belongs to the alternative oxidase family. Requires Fe cation as cofactor.

The protein resides in the mitochondrion inner membrane. Its function is as follows. Catalyzes cyanide-resistant oxygen consumption. May increase respiration when the cytochrome respiratory pathway is restricted, or in response to low temperatures. The chain is Alternative oxidase 1, mitochondrial (AOX1) from Candida albicans (Yeast).